The primary structure comprises 206 residues: MKPFTILNGIAALLDRPNVDTDQIIPKQFLRKIERTGFGVHLFHDWRYLDDAGTKLNPDFSLNQERYKGASILITRDNFGCGSSREHAPWALEDYGFRAIIAPSYADIFFNNCFKNGMLPVILKSEEVEELFHLVSTNVGAKVIVDLDKQTVTGPTGKIYYFEVDSFRKYCLYNGLDDIGLTLKQESKIGEFEKKQKEVEPWLYAI.

It belongs to the LeuD family. LeuD type 1 subfamily. As to quaternary structure, heterodimer of LeuC and LeuD.

The catalysed reaction is (2R,3S)-3-isopropylmalate = (2S)-2-isopropylmalate. It functions in the pathway amino-acid biosynthesis; L-leucine biosynthesis; L-leucine from 3-methyl-2-oxobutanoate: step 2/4. Its function is as follows. Catalyzes the isomerization between 2-isopropylmalate and 3-isopropylmalate, via the formation of 2-isopropylmaleate. The chain is 3-isopropylmalate dehydratase small subunit from Leptospira interrogans serogroup Icterohaemorrhagiae serovar copenhageni (strain Fiocruz L1-130).